We begin with the raw amino-acid sequence, 572 residues long: Probable transporter MCH1 (572 aa).

Positions 1–29 (MSSSAPDDTQASRLDADQISTRSSSYASD) are enriched in polar residues. Residues 1–39 (MSSSAPDDTQASRLDADQISTRSSSYASDNDTDSTETRI) form a disordered region. A glycan (N-linked (GlcNAc...) asparagine) is linked at N30. 10 helical membrane-spanning segments follow: residues 50–70 (LLAF…VVFS), 89–109 (AVAI…GYIC), 116–136 (PLAL…AGVY), 159–179 (FLML…MAAV), 193–213 (GLAL…LSQA), 232–252 (VFRF…LGTF), 335–355 (LAFL…GTII), 426–446 (FMAF…SGLV), 459–479 (LVGA…TIIW), and 488–508 (YGLI…VYSA). N515 is a glycosylation site (N-linked (GlcNAc...) asparagine). The chain crosses the membrane as a helical span at residues 539 to 559 (PTYWAETITVWIAVGLLLWAW).

Belongs to the major facilitator superfamily.

It localises to the vacuole membrane. Probable transporter. This chain is Probable transporter MCH1 (MCH1), found in Gibberella zeae (strain ATCC MYA-4620 / CBS 123657 / FGSC 9075 / NRRL 31084 / PH-1) (Wheat head blight fungus).